The chain runs to 58 residues: Large ribosomal subunit protein uL30 (58 aa).

It belongs to the universal ribosomal protein uL30 family. As to quaternary structure, part of the 50S ribosomal subunit.

The sequence is that of Large ribosomal subunit protein uL30 from Pseudomonas savastanoi pv. phaseolicola (strain 1448A / Race 6) (Pseudomonas syringae pv. phaseolicola (strain 1448A / Race 6)).